Here is a 445-residue protein sequence, read N- to C-terminus: Phosphoglucosamine mutase (445 aa).

The active-site Phosphoserine intermediate is S99. Positions 99, 242, 244, and 246 each coordinate Mg(2+). A Phosphoserine modification is found at S99.

The protein belongs to the phosphohexose mutase family. It depends on Mg(2+) as a cofactor. In terms of processing, activated by phosphorylation.

The enzyme catalyses alpha-D-glucosamine 1-phosphate = D-glucosamine 6-phosphate. Catalyzes the conversion of glucosamine-6-phosphate to glucosamine-1-phosphate. The chain is Phosphoglucosamine mutase from Campylobacter jejuni subsp. jejuni serotype O:6 (strain 81116 / NCTC 11828).